The sequence spans 155 residues: Ribosomal RNA large subunit methyltransferase H (155 aa).

Residues Leu-72, Gly-103, and 122–127 contribute to the S-adenosyl-L-methionine site; that span reads LSDLTL.

The protein belongs to the RNA methyltransferase RlmH family. As to quaternary structure, homodimer.

The protein localises to the cytoplasm. The enzyme catalyses pseudouridine(1915) in 23S rRNA + S-adenosyl-L-methionine = N(3)-methylpseudouridine(1915) in 23S rRNA + S-adenosyl-L-homocysteine + H(+). Its function is as follows. Specifically methylates the pseudouridine at position 1915 (m3Psi1915) in 23S rRNA. This chain is Ribosomal RNA large subunit methyltransferase H, found in Polaromonas naphthalenivorans (strain CJ2).